The sequence spans 293 residues: Epidermal growth factor-like protein 8 (293 aa).

A signal peptide spans 1–25 (MGSRAELCTLLGGFSFLLLLIPGEG). The region spanning 34 to 112 (SQGVCSKQTL…RHPGALTCEA (79 aa)) is the EMI domain. 9 disulfide bridges follow: Cys-38/Cys-97, Cys-65/Cys-71, Cys-96/Cys-110, Cys-114/Cys-124, Cys-118/Cys-130, Cys-132/Cys-141, Cys-148/Cys-159, Cys-155/Cys-168, and Cys-170/Cys-183. The N-linked (GlcNAc...) asparagine glycan is linked to Asn-50. The region spanning 111–142 (EAICAKPCLNGGVCVRPDQCECAPGWGGKHCH) is the EGF-like 1 domain. Residues 144 to 184 (DVDECRTSITLCSHHCFNTAGSFTCGCPHDLVLGVDGRTCM) form the EGF-like 2; calcium-binding domain. A coiled-coil region spans residues 195–232 (SILSVAVREAEKDERALKQEIHELRGRLERLEQWAGQA).

The protein localises to the secreted. This chain is Epidermal growth factor-like protein 8 (EGFL8), found in Homo sapiens (Human).